A 330-amino-acid chain; its full sequence is Ribose-phosphate pyrophosphokinase (330 aa).

55-57 is a binding site for ATP; it reads DGE. Residues histidine 148 and aspartate 187 each coordinate Mg(2+). Lysine 211 is a catalytic residue. D-ribose 5-phosphate-binding positions include arginine 213, aspartate 237, and 241-245; that span reads DTGGT.

The protein belongs to the ribose-phosphate pyrophosphokinase family. Class I subfamily. Homohexamer. Mg(2+) serves as cofactor.

It localises to the cytoplasm. It catalyses the reaction D-ribose 5-phosphate + ATP = 5-phospho-alpha-D-ribose 1-diphosphate + AMP + H(+). The protein operates within metabolic intermediate biosynthesis; 5-phospho-alpha-D-ribose 1-diphosphate biosynthesis; 5-phospho-alpha-D-ribose 1-diphosphate from D-ribose 5-phosphate (route I): step 1/1. Its function is as follows. Involved in the biosynthesis of the central metabolite phospho-alpha-D-ribosyl-1-pyrophosphate (PRPP) via the transfer of pyrophosphoryl group from ATP to 1-hydroxyl of ribose-5-phosphate (Rib-5-P). This is Ribose-phosphate pyrophosphokinase from Nostoc sp. (strain PCC 7120 / SAG 25.82 / UTEX 2576).